We begin with the raw amino-acid sequence, 394 residues long: Elongation factor Tu (394 aa).

Positions 10 to 204 (KPHINVGTIG…FLDTYIPEPK (195 aa)) constitute a tr-type G domain. Residues 19–26 (GHVDHGKT) form a G1 region. A GTP-binding site is contributed by 19–26 (GHVDHGKT). A Mg(2+)-binding site is contributed by Thr-26. The tract at residues 60–64 (GITIN) is G2. A G3 region spans residues 81 to 84 (DCPG). GTP-binding positions include 81-85 (DCPGH) and 136-139 (NKCD). The interval 136–139 (NKCD) is G4. The G5 stretch occupies residues 174–176 (SAL).

Belongs to the TRAFAC class translation factor GTPase superfamily. Classic translation factor GTPase family. EF-Tu/EF-1A subfamily. Monomer.

It is found in the cytoplasm. It catalyses the reaction GTP + H2O = GDP + phosphate + H(+). In terms of biological role, GTP hydrolase that promotes the GTP-dependent binding of aminoacyl-tRNA to the A-site of ribosomes during protein biosynthesis. This Buchnera aphidicola subsp. Schizaphis graminum (strain Sg) protein is Elongation factor Tu.